The chain runs to 132 residues: Large ribosomal subunit protein bL12 (132 aa).

It belongs to the bacterial ribosomal protein bL12 family. Homodimer. Part of the ribosomal stalk of the 50S ribosomal subunit. Forms a multimeric L10(L12)X complex, where L10 forms an elongated spine to which 2 to 4 L12 dimers bind in a sequential fashion. Binds GTP-bound translation factors.

In terms of biological role, forms part of the ribosomal stalk which helps the ribosome interact with GTP-bound translation factors. Is thus essential for accurate translation. The chain is Large ribosomal subunit protein bL12 from Chloroflexus aurantiacus (strain ATCC 29366 / DSM 635 / J-10-fl).